An 817-amino-acid polypeptide reads, in one-letter code: DNA gyrase subunit A (817 aa).

Positions 39 to 505 constitute a Topo IIA-type catalytic domain; that stretch reads LPDARDGLKP…AVEDVSIEDL (467 aa). Tyrosine 127 acts as the O-(5'-phospho-DNA)-tyrosine intermediate in catalysis. Positions 532–538 match the GyrA-box motif; it reads QGRGGKG.

This sequence belongs to the type II topoisomerase GyrA/ParC subunit family. In terms of assembly, heterotetramer, composed of two GyrA and two GyrB chains. In the heterotetramer, GyrA contains the active site tyrosine that forms a transient covalent intermediate with DNA, while GyrB binds cofactors and catalyzes ATP hydrolysis.

It localises to the cytoplasm. The catalysed reaction is ATP-dependent breakage, passage and rejoining of double-stranded DNA.. Functionally, a type II topoisomerase that negatively supercoils closed circular double-stranded (ds) DNA in an ATP-dependent manner to modulate DNA topology and maintain chromosomes in an underwound state. Negative supercoiling favors strand separation, and DNA replication, transcription, recombination and repair, all of which involve strand separation. Also able to catalyze the interconversion of other topological isomers of dsDNA rings, including catenanes and knotted rings. Type II topoisomerases break and join 2 DNA strands simultaneously in an ATP-dependent manner. The polypeptide is DNA gyrase subunit A (Aminobacterium colombiense (strain DSM 12261 / ALA-1)).